The primary structure comprises 306 residues: Protoheme IX farnesyltransferase (306 aa).

The next 8 helical transmembrane spans lie at 31–50 (VIEL…QGGW), 55–77 (LILG…NCYI), 104–124 (LVFA…ISNW), 125–145 (LAAA…TLWL), 168–188 (WAAV…IVFL), 218–235 (GRAA…ATLA), 238–258 (LLLI…LAGG), and 286–306 (ASIS…LLPF).

This sequence belongs to the UbiA prenyltransferase family. Protoheme IX farnesyltransferase subfamily.

It is found in the cell membrane. The catalysed reaction is heme b + (2E,6E)-farnesyl diphosphate + H2O = Fe(II)-heme o + diphosphate. The protein operates within porphyrin-containing compound metabolism; heme O biosynthesis; heme O from protoheme: step 1/1. In terms of biological role, converts heme B (protoheme IX) to heme O by substitution of the vinyl group on carbon 2 of heme B porphyrin ring with a hydroxyethyl farnesyl side group. This is Protoheme IX farnesyltransferase from Clavibacter sepedonicus (Clavibacter michiganensis subsp. sepedonicus).